Consider the following 240-residue polypeptide: TATA-box-binding protein (240 aa).

Positions 21 to 61 (NTRQVWENQNRDGTKPATTFQSEEDIKRAAPESEKDTSATS) are disordered. A compositionally biased stretch (basic and acidic residues) spans 44–57 (EDIKRAAPESEKDT). A run of 2 repeats spans residues 67–143 (LQNI…ARII) and 157–234 (IQNI…YPVL).

It belongs to the TBP family. Binds DNA as monomer. The 1.2 MDa TFIID complex is composed of TATA binding protein (TBP) and the 14 TBP-associated factors. One copy of each TAF1, TAF2, TAF3, TAF7, TAF8, TAF11, TAF13, two copies of each TAF4, TAF5, TAF6, TAF9, TAF10, TAF12, and three copies of TAF14. Interacts with TFC8.

The protein localises to the nucleus. Functionally, general transcription factor that functions at the core of the DNA-binding general transcription factor complex TFIID. Binding of TFIID to a promoter (with or without TATA element) is the initial step in preinitiation complex (PIC) formation. TFIID plays a key role in the regulation of gene expression by RNA polymerase II through different activities such as transcription activator interaction, core promoter recognition and selectivity, TFIIA and TFIIB interaction, chromatin modification (histone acetylation by TAF1), facilitation of DNA opening and initiation of transcription. This is TATA-box-binding protein (SPT15) from Saccharomyces cerevisiae (strain ATCC 204508 / S288c) (Baker's yeast).